Reading from the N-terminus, the 408-residue chain is Homogentisate geranylgeranyltransferase (408 aa).

A chloroplast-targeting transit peptide spans 1 to 62; the sequence is MQAVTAAAAA…TVMHKFSAIS (62 aa). 9 helical membrane passes run 122–142, 156–176, 194–214, 221–241, 248–268, 286–306, 329–349, 352–372, and 386–406; these read HTIFGTIIGITSVSLLPMKSI, ALTAALCMNIYVVGLNQLYDI, SVATGVFLVLAFLIMSFSIGI, LMCALIVSFLLGSAYSIEAPF, ALLAASCILFVRAILVQLAFF, LVFATLFMCCFSAVIALFKDI, VYQLCISILLTAYGAATLVGA, TNLFQKIITVSGHGLLALTLW, and VTSFYMFIWKLFYAEYFLIPF.

The protein belongs to the UbiA prenyltransferase family. Expressed in seeds.

It is found in the plastid. The protein resides in the chloroplast membrane. The enzyme catalyses homogentisate + (2E,6E,10E)-geranylgeranyl diphosphate + H(+) = 6-geranylgeranyl-2-methylbenzene-1,4-diol + CO2 + diphosphate. Its pathway is cofactor biosynthesis; tocopherol biosynthesis. Involved in the synthesis of tocotrienol (vitamin E). Catalyzes the condensation of homogentisate and geranylgeranyl diphosphate to form 2-methyl-6-geranylgeranylbenzoquinol. Possesses low activity with phytyl diphosphate as substrate. The polypeptide is Homogentisate geranylgeranyltransferase (Hordeum vulgare (Barley)).